The primary structure comprises 769 residues: Acetyl-coenzyme A carboxylase carboxyl transferase subunit alpha, chloroplastic (769 aa).

Residues 1–54 constitute a chloroplast transit peptide; it reads MASISHSSLALGGASSASASDYLRSSSNGVNGVPLKTLGRAVFTTIRRKDLAVT. The CoA carboxyltransferase C-terminal domain occupies 132–385; sequence LENKYRQALK…KIAINENMNE (254 aa). Coiled-coil stretches lie at residues 426-504 and 631-744; these read EAVF…ASSE and KQNQ…SDGS. Residues 718–769 are disordered; that stretch reads GLQEKQDELEKELAAARELAAEESDGSVKEDDDDDEDSSESGKSEMVNPSFA. The span at 721–732 shows a compositional bias: basic and acidic residues; the sequence is EKQDELEKELAA. Acidic residues predominate over residues 738–756; that stretch reads AEESDGSVKEDDDDDEDSS. Serine 741 bears the Phosphoserine mark.

This sequence belongs to the AccA family. As to quaternary structure, acetyl-CoA carboxylase is a heterohexamer composed of biotin carboxyl carrier protein, biotin carboxylase and two subunits each of ACCase subunit alpha and ACCase plastid-coded subunit beta (accD). As to expression, accumulates in fatty acids synthesizing tissues such as embryos, expanding leaves, flower buds, flowers, and developing siliques.

It is found in the plastid. Its subcellular location is the chloroplast inner membrane. The enzyme catalyses N(6)-carboxybiotinyl-L-lysyl-[protein] + acetyl-CoA = N(6)-biotinyl-L-lysyl-[protein] + malonyl-CoA. The protein operates within lipid metabolism; malonyl-CoA biosynthesis; malonyl-CoA from acetyl-CoA: step 1/1. In terms of biological role, component of the acetyl coenzyme A carboxylase (ACC) complex. First, biotin carboxylase catalyzes the carboxylation of biotin on its carrier protein (BCCP) and then the CO(2) group is transferred by the carboxyltransferase to acetyl-CoA to form malonyl-CoA. The sequence is that of Acetyl-coenzyme A carboxylase carboxyl transferase subunit alpha, chloroplastic (CAC3) from Arabidopsis thaliana (Mouse-ear cress).